The sequence spans 430 residues: Mannan endo-1,4-beta-mannosidase (430 aa).

E173 serves as the catalytic Proton donor. The active-site Nucleophile is E269. CBM10 domains lie at 357–390 and 395–424; these read SCGT…CVVA and SCNW…CIAA.

This sequence belongs to the glycosyl hydrolase 5 (cellulase A) family.

It catalyses the reaction Random hydrolysis of (1-&gt;4)-beta-D-mannosidic linkages in mannans, galactomannans and glucomannans.. In terms of biological role, catalyzes the endo hydrolysis of beta-1,4-linked mannan, galactomannan and glucomannan. It is able to hydrolyze mannosidic linkages that are flanked by mannose or glucose. The polypeptide is Mannan endo-1,4-beta-mannosidase (Cellvibrio japonicus (strain Ueda107) (Pseudomonas fluorescens subsp. cellulosa)).